We begin with the raw amino-acid sequence, 238 residues long: Ubiquinone biosynthesis O-methyltransferase (238 aa).

Residues Arg40, Gly59, Asp81, and Met126 each coordinate S-adenosyl-L-methionine.

The protein belongs to the methyltransferase superfamily. UbiG/COQ3 family.

The enzyme catalyses a 3-demethylubiquinol + S-adenosyl-L-methionine = a ubiquinol + S-adenosyl-L-homocysteine + H(+). The catalysed reaction is a 3-(all-trans-polyprenyl)benzene-1,2-diol + S-adenosyl-L-methionine = a 2-methoxy-6-(all-trans-polyprenyl)phenol + S-adenosyl-L-homocysteine + H(+). Its pathway is cofactor biosynthesis; ubiquinone biosynthesis. Its function is as follows. O-methyltransferase that catalyzes the 2 O-methylation steps in the ubiquinone biosynthetic pathway. This chain is Ubiquinone biosynthesis O-methyltransferase, found in Neisseria meningitidis serogroup C (strain 053442).